A 146-amino-acid chain; its full sequence is uncharacterized protein (146 aa).

Positions 7–146 constitute an N-acetyltransferase domain; sequence LDINYKTDEL…DGHDVLVWTP (140 aa).

This is an uncharacterized protein from Staphylococcus saprophyticus subsp. saprophyticus (strain ATCC 15305 / DSM 20229 / NCIMB 8711 / NCTC 7292 / S-41).